The sequence spans 759 residues: Phosphoribosylformylglycinamidine synthase subunit PurL (759 aa).

Residue His46 is part of the active site. The ATP site is built by Tyr49 and Lys88. Glu90 contacts Mg(2+). Residues 91 to 94 (SHNH) and Arg113 each bind substrate. His92 serves as the catalytic Proton acceptor. Asp114 contacts Mg(2+). Residue Gln237 coordinates substrate. A Mg(2+)-binding site is contributed by Asp265. 309–311 (ESQ) provides a ligand contact to substrate. ATP contacts are provided by Asp498 and Gly535. Asn536 serves as a coordination point for Mg(2+). Ser538 provides a ligand contact to substrate.

Belongs to the FGAMS family. In terms of assembly, monomer. Part of the FGAM synthase complex composed of 1 PurL, 1 PurQ and 2 PurS subunits.

It localises to the cytoplasm. The catalysed reaction is N(2)-formyl-N(1)-(5-phospho-beta-D-ribosyl)glycinamide + L-glutamine + ATP + H2O = 2-formamido-N(1)-(5-O-phospho-beta-D-ribosyl)acetamidine + L-glutamate + ADP + phosphate + H(+). Its pathway is purine metabolism; IMP biosynthesis via de novo pathway; 5-amino-1-(5-phospho-D-ribosyl)imidazole from N(2)-formyl-N(1)-(5-phospho-D-ribosyl)glycinamide: step 1/2. Its function is as follows. Part of the phosphoribosylformylglycinamidine synthase complex involved in the purines biosynthetic pathway. Catalyzes the ATP-dependent conversion of formylglycinamide ribonucleotide (FGAR) and glutamine to yield formylglycinamidine ribonucleotide (FGAM) and glutamate. The FGAM synthase complex is composed of three subunits. PurQ produces an ammonia molecule by converting glutamine to glutamate. PurL transfers the ammonia molecule to FGAR to form FGAM in an ATP-dependent manner. PurS interacts with PurQ and PurL and is thought to assist in the transfer of the ammonia molecule from PurQ to PurL. This is Phosphoribosylformylglycinamidine synthase subunit PurL from Anaeromyxobacter dehalogenans (strain 2CP-1 / ATCC BAA-258).